Consider the following 472-residue polypeptide: Sporozoite surface protein P36p (472 aa).

Residues 1-23 form the signal peptide; it reads MMKRRRIFMYYCFCFLLKYVAFS. N-linked (GlcNAc...) asparagine glycans are attached at residues asparagine 24, asparagine 29, asparagine 93, asparagine 112, and asparagine 185. 6-Cys domains are found at residues 24–157 and 160–299; these read NVTN…FKKM and KIKG…TSKN. 5 disulfide bridges follow: cysteine 64–cysteine 138, cysteine 81–cysteine 136, cysteine 164–cysteine 188, cysteine 202–cysteine 281, and cysteine 222–cysteine 279. Residues asparagine 295, asparagine 306, asparagine 383, asparagine 396, asparagine 400, and asparagine 416 are each glycosylated (N-linked (GlcNAc...) asparagine). Positions 359–385 are disordered; it reads KMDPSDEDESNENAHNGNRANKDANYS. Serine 449 carries GPI-anchor amidated serine lipidation. Positions 450–472 are cleaved as a propeptide — removed in mature form; sequence SSYYEVFNYFSIAFILIIHMLLW.

It is found in the cell surface. It localises to the cell membrane. Functionally, involved in sporozoite infection of hepatocytes and replication therein. This is Sporozoite surface protein P36p (P52) from Plasmodium berghei (strain Anka).